The chain runs to 613 residues: Ectonucleoside triphosphate diphosphohydrolase 4 (613 aa).

Over 1-33 (MGRIGISCLFPASWHFSISPVGCPRILNTNLRQ) the chain is Cytoplasmic. Residues 34 to 54 (IVVISILAAAVSLLYFSVVII) form a helical membrane-spanning segment. The Lumenal segment spans residues 55–559 (RSKYGWLSKD…AGHAHWRGVS (505 aa)). Glutamate 222 functions as the Proton acceptor in the catalytic mechanism. Cysteines 368 and 395 form a disulfide. Residues asparagine 404 and asparagine 407 are each glycosylated (N-linked (GlcNAc...) asparagine). Cysteine 461 and cysteine 490 form a disulfide bridge. A helical transmembrane segment spans residues 560 to 580 (FVYNHYLFSGCFLVVLLSILL). Residues 581–613 (YLLRLRRIHRRAPRTGSLWMEEGLPSQKGPGPL) are Cytoplasmic-facing.

This sequence belongs to the GDA1/CD39 NTPase family. Ca(2+) is required as a cofactor. Mg(2+) serves as cofactor. As to expression, ubiquitous.

Its subcellular location is the cytoplasmic vesicle. The protein resides in the autophagosome membrane. It is found in the lysosome membrane. The protein localises to the golgi apparatus membrane. It carries out the reaction a ribonucleoside 5'-triphosphate + H2O = a ribonucleoside 5'-diphosphate + phosphate + H(+). The enzyme catalyses a ribonucleoside 5'-diphosphate + H2O = a ribonucleoside 5'-phosphate + phosphate + H(+). It catalyses the reaction UDP + H2O = UMP + phosphate + H(+). The catalysed reaction is UTP + H2O = UDP + phosphate + H(+). It carries out the reaction CTP + H2O = CDP + phosphate + H(+). The enzyme catalyses GDP + H2O = GMP + phosphate + H(+). It catalyses the reaction 5-methyl-UTP + H2O = 5-methyl-UDP + phosphate + H(+). In terms of biological role, catalyzes the hydrolysis of nucleoside triphosphates and diphosphates in a calcium- or magnesium-dependent manner, with a preference for pyrimidines. Preferentially hydrolyzes UTP and TTP on UTP and TTP. AMP, ADP, ATP and UMP are not substrates. Preferentially activated by Ca(2+) over Mg(2+). Its function is as follows. Has a broad substrate specificity with the ability of cleaving all nucleotide di- and triphosphates with the exception of adenosine di- and triphosphate (ADP and ATP). Preferentially hydrolyzes CTP, UDP, CDP, GTP and GDP. Can use either Ca(2+) or Mg(2+) equally. This Mus musculus (Mouse) protein is Ectonucleoside triphosphate diphosphohydrolase 4 (Entpd4).